A 54-amino-acid polypeptide reads, in one-letter code: H-bracotoxin-Cf4 (54 aa).

An N-terminal signal peptide occupies residues 1-21; that stretch reads MSKLFIFFLLVALLAFVSSEA. 3 disulfide bridges follow: Cys24–Cys39, Cys31–Cys43, and Cys38–Cys53.

As to expression, expressed by the venom duct.

The protein resides in the secreted. Functionally, this endoparasitoid wasp peptide has a role in disruption of the cellular host immune response, since it reduces the capacity of D.saccharalis hemocytes to encapsulate foreign bodies. On the other hand, it shows no effect on the humoral immune response, since it has no effect on phenoloxidase activity. This Cotesia flavipes (Parasitic wasp) protein is H-bracotoxin-Cf4.